We begin with the raw amino-acid sequence, 247 residues long: Probable transcriptional regulatory protein LAF_0541 (247 aa).

Residues 1–22 (MSGHSKWHNIQGRKNAQDAKRG) are disordered.

This sequence belongs to the TACO1 family.

The protein resides in the cytoplasm. This is Probable transcriptional regulatory protein LAF_0541 from Limosilactobacillus fermentum (strain NBRC 3956 / LMG 18251) (Lactobacillus fermentum).